Here is a 386-residue protein sequence, read N- to C-terminus: Acyl-lipid omega-3 desaturase (cytochrome b5), endoplasmic reticulum (386 aa).

The segment at 1–30 (MVVAMDQRTNVNGDPGAGDRKKEERFDPSA) is disordered. The segment covering 17–27 (AGDRKKEERFD) has biased composition (basic and acidic residues). A helical membrane pass occupies residues 63-83 (IIAVAALAIAAVYVDSWFLWP). Residues 101–105 (HDCGH) carry the Histidine box-1 motif. The short motif at 137-141 (HRTHH) is the Histidine box-2 element. Transmembrane regions (helical) follow at residues 220–240 (WSIM…LAVL) and 242–262 (VYGV…YLHH). Positions 304-308 (HVIHH) match the Histidine box-3 motif.

The protein belongs to the fatty acid desaturase type 1 family. As to expression, abundant in leaves and seedlings. Barely detectable in root tissue.

It is found in the endoplasmic reticulum membrane. It carries out the reaction a (9Z,12Z)-octadecadienoyl-containing glycerolipid + 2 Fe(II)-[cytochrome b5] + O2 + 2 H(+) = (9Z,12Z,15Z)-octadecatrienoyl-containing glycerolipid + 2 Fe(III)-[cytochrome b5] + 2 H2O. It participates in lipid metabolism; polyunsaturated fatty acid biosynthesis. Functionally, microsomal (ER) omega-3 fatty acid desaturase introduces the third double bond in the biosynthesis of 18:3 fatty acids, important constituents of plant membranes. It is thought to use cytochrome b5 as an electron donor and to act on fatty acids esterified to phosphatidylcholine and, possibly, other phospholipids. The protein is Acyl-lipid omega-3 desaturase (cytochrome b5), endoplasmic reticulum of Arabidopsis thaliana (Mouse-ear cress).